Here is a 401-residue protein sequence, read N- to C-terminus: Acetate kinase (401 aa).

Asn9 serves as a coordination point for Mg(2+). Position 16 (Lys16) interacts with ATP. Arg88 is a binding site for substrate. Asp147 functions as the Proton donor/acceptor in the catalytic mechanism. ATP is bound by residues 207–211 (HLGNG), 282–284 (DCR), and 333–337 (GIGEN). Glu388 contributes to the Mg(2+) binding site.

The protein belongs to the acetokinase family. As to quaternary structure, homodimer. Mg(2+) serves as cofactor. It depends on Mn(2+) as a cofactor.

Its subcellular location is the cytoplasm. The enzyme catalyses acetate + ATP = acetyl phosphate + ADP. It functions in the pathway metabolic intermediate biosynthesis; acetyl-CoA biosynthesis; acetyl-CoA from acetate: step 1/2. In terms of biological role, catalyzes the formation of acetyl phosphate from acetate and ATP. Can also catalyze the reverse reaction. The polypeptide is Acetate kinase (Haemophilus influenzae (strain PittGG)).